Reading from the N-terminus, the 510-residue chain is MAAAGAMPGGLLLTFLLLAVVASGAYNGAGEPPVSRRSFPKGFIFGTASSSYQYEGGAAEGGRGPSIWDTFTHQHPEKIADRSNGDVASDSYHLYKEDVRLMKDMGMDAYRFSISWTRILPNGSLRGGVNKEGIKYYNNLINELLSKGVQPFITLFHWDSPQALEDKYNGFLSPNIINDFKDYAEICFKEFGDRVKNWITFNEPWTFCSNGYATGLFAPGRCSPWEKGNCSVGDSGREPYTACHHQLLAHAETVRLYKAKYQALQKGKIGITLVSHWFVPFSRSKSNDDAAKRAIDFMFGWFMDPLIRGDYPLSMRGLVGNRLPQFTKEQSKLVKGAFDFIGLNYYTANYADNLPPSNGLNNSYTTDSRANLTGVRNGIPIGPQAASPWLYVYPQGFRDLLLYVKENYGNPTVYITENGVDEFNNKTLPLQEALKDDARIEYYHKHLLSLLSAIRDGANVKGYFAWSLLDNFEWSNGYTVRFGINFVDYNDGRKRYPKNSAHWFKKFLLK.

A signal peptide spans 1–24 (MAAAGAMPGGLLLTFLLLAVVASG). Residue Gln53 coordinates a beta-D-glucoside. Residue Asn122 is glycosylated (N-linked (GlcNAc...) asparagine). A beta-D-glucoside contacts are provided by residues His157 and 202–203 (NE). Glu203 (proton donor) is an active-site residue. 2 cysteine pairs are disulfide-bonded: Cys208–Cys243 and Cys222–Cys230. Asn229 carries an N-linked (GlcNAc...) asparagine glycan. Tyr346 is an a beta-D-glucoside binding site. Asn361 and Asn371 each carry an N-linked (GlcNAc...) asparagine glycan. Position 417 (Glu417) interacts with a beta-D-glucoside. Glu417 (nucleophile) is an active-site residue. A glycan (N-linked (GlcNAc...) asparagine) is linked at Asn425. A beta-D-glucoside-binding positions include Trp466, 473-474 (EW), and Phe482.

The protein belongs to the glycosyl hydrolase 1 family.

It is found in the secreted. It catalyses the reaction Hydrolysis of terminal, non-reducing beta-D-glucosyl residues with release of beta-D-glucose.. Its function is as follows. Hydrolyzes p-nitrophenyl beta-D-glucoside, p-nitrophenyl beta-D-galactoside, p-nitrophenyl beta-D-xyloside, p-nitrophenyl beta-D-fucoside, p-nitrophenyl beta-L-arabinoside, cello-oligosaccharides and laminaribiose. This Oryza sativa subsp. japonica (Rice) protein is Beta-glucosidase 12.